The chain runs to 778 residues: Protein SPT2 homolog (778 aa).

3 disordered regions span residues 1–21 (MDFHSVLKMAAAKPGSDGIAK), 50–625 (KKDE…AKPK), and 639–685 (VPKS…DDDD). Positions 1-665 (MDFHSVLKMA…PGHRPAMRPP (665 aa)) are important for interaction with DNA. Residues 44-83 (VQAFLRKKDEESRRKETVEKRKKEDLLAKRKELKHDRKAR) adopt a coiled-coil conformation. The span at 50-78 (KKDEESRRKETVEKRKKEDLLAKRKELKH) shows a compositional bias: basic and acidic residues. Acidic residues predominate over residues 114 to 135 (EEDQNDNMAAEGEEYMTEEELY). The segment covering 153–167 (QKVPKPAPGKKPPTP) has biased composition (pro residues). A compositionally biased stretch (basic and acidic residues) spans 190 to 227 (RPVKKEERLRTAEELKELEFLERKAQKADRKDPKRNEQ). The stretch at 193–221 (KKEERLRTAEELKELEFLERKAQKADRKD) forms a coiled coil. Positions 242 to 269 (LKGTHSGNSKSSSTEQNGTIRKSSSDTG) are enriched in polar residues. Basic and acidic residues predominate over residues 270–286 (SRTEKSGSVFHTKESKK). Residues 312 to 335 (SSQPSAASNSAFGRPSGSARPSGS) show a composition bias toward low complexity. Gly residues-rich tracts occupy residues 336–357 (SGPGRPLGGSGSSSGKSTGGSA) and 365–384 (GGSGSGSGKPMGGSGSGKPI). Positions 385-394 (GGLHSSHGSG) are enriched in low complexity. Gly residues predominate over residues 395 to 417 (KPTGGTGSGSGKPTGASGSGSGK). Composition is skewed to low complexity over residues 418 to 493 (PTGS…SGSA) and 506 to 559 (GSGS…PSSS). Over residues 588-604 (VRPNSTSVPGSARSSLG) the composition is skewed to polar residues. Positions 662–671 (MRPPGPPLPP) are enriched in pro residues. Residues 666–778 (GPPLPPITSS…QLKAAKKMSR (113 aa)) form an important for interaction with histones region. A coiled-coil region spans residues 735-778 (REQQKEEARSLRLGIQEDLEELQREEEELKRKAKQLKAAKKMSR).

It belongs to the SPT2 family. As to quaternary structure, interacts with histones. Interacts with a heterotetrameric complex formed by histone H3 and H4, especially when the histone tetramer is not bound to DNA.

The protein resides in the nucleus. It localises to the nucleolus. Functionally, histone chaperone that stabilizes pre-existing histone tetramers and regulates replication-independent histone exchange on chromatin. Required for normal chromatin refolding in the coding region of transcribed genes, and for the suppression of spurious transcription. Binds DNA and histones and promotes nucleosome assembly (in vitro). Facilitates formation of tetrameric histone complexes containing histone H3 and H4. Modulates RNA polymerase 1-mediated transcription. Binds DNA, with a preference for branched DNA species, such as Y-form DNA and Holliday junction DNA. The protein is Protein SPT2 homolog (spty2d1) of Xenopus tropicalis (Western clawed frog).